A 187-amino-acid chain; its full sequence is Protein GrpE (187 aa).

The disordered stretch occupies residues M1–L31.

The protein belongs to the GrpE family. Homodimer.

Its subcellular location is the cytoplasm. Participates actively in the response to hyperosmotic and heat shock by preventing the aggregation of stress-denatured proteins, in association with DnaK and GrpE. It is the nucleotide exchange factor for DnaK and may function as a thermosensor. Unfolded proteins bind initially to DnaJ; upon interaction with the DnaJ-bound protein, DnaK hydrolyzes its bound ATP, resulting in the formation of a stable complex. GrpE releases ADP from DnaK; ATP binding to DnaK triggers the release of the substrate protein, thus completing the reaction cycle. Several rounds of ATP-dependent interactions between DnaJ, DnaK and GrpE are required for fully efficient folding. The chain is Protein GrpE from Borrelia garinii subsp. bavariensis (strain ATCC BAA-2496 / DSM 23469 / PBi) (Borreliella bavariensis).